The primary structure comprises 185 residues: Photosystem I assembly protein Ycf4 (185 aa).

The next 2 helical transmembrane spans lie at 24–44 (YIIGGMLTIGGIGFLLASISS) and 66–86 (IIMGAYGVIANLLNFYLWYLV).

The protein belongs to the Ycf4 family.

It localises to the cellular thylakoid membrane. In terms of biological role, seems to be required for the assembly of the photosystem I complex. In Prochlorococcus marinus (strain MIT 9301), this protein is Photosystem I assembly protein Ycf4.